Reading from the N-terminus, the 854-residue chain is DNA gyrase subunit A (854 aa).

The region spanning L42 to L510 is the Topo IIA-type catalytic domain. The O-(5'-phospho-DNA)-tyrosine intermediate role is filled by Y129. A GyrA-box motif is present at residues Q537–G543.

It belongs to the type II topoisomerase GyrA/ParC subunit family. As to quaternary structure, heterotetramer, composed of two GyrA and two GyrB chains. In the heterotetramer, GyrA contains the active site tyrosine that forms a transient covalent intermediate with DNA, while GyrB binds cofactors and catalyzes ATP hydrolysis.

Its subcellular location is the cytoplasm. The catalysed reaction is ATP-dependent breakage, passage and rejoining of double-stranded DNA.. Its activity is regulated as follows. DNA supercoiling is inhibited by the coumarin antibiotic novobiocin. Also inhibited by the fluoroquinolones ciprofloxacin and moxifloxacin. Functionally, a type II topoisomerase that negatively supercoils closed circular double-stranded (ds) DNA in an ATP-dependent manner to modulate DNA topology and maintain chromosomes in an underwound state; also catalyzes the interconversion of other topological isomers of double-stranded DNA rings, including catenanes. At comparable concentrations has a stronger decatenation activity than E.coli, which is inhibited by ciprofloxacin and novobiocin. Cleaves dsDNA at the sequence 5'-AT/GGCC-3', leaving a 4 base overhang. Relaxes negatively supercoiled DNA in an ATP-independent manner. Its function is as follows. Negative supercoiling favors strand separation, and DNA replication, transcription, recombination and repair, all of which involve strand separation. Type II topoisomerases break and join 2 DNA strands simultaneously in an ATP-dependent manner. This is DNA gyrase subunit A from Mycolicibacterium smegmatis (Mycobacterium smegmatis).